Reading from the N-terminus, the 102-residue chain is MAKAGNIERVVERADTELMPPSMYKVILNNDDYTPMDFVVEVLQLFFKMNEHQATEIMLQIHHQGKAVCGVFPFGIAETKVAQVNQFARQNQHPLLCSLEKA.

The protein belongs to the ClpS family. In terms of assembly, binds to the N-terminal domain of the chaperone ClpA.

Involved in the modulation of the specificity of the ClpAP-mediated ATP-dependent protein degradation. This is ATP-dependent Clp protease adapter protein ClpS from Shewanella amazonensis (strain ATCC BAA-1098 / SB2B).